Reading from the N-terminus, the 249-residue chain is Ubiquinone/menaquinone biosynthesis C-methyltransferase UbiE (249 aa).

S-adenosyl-L-methionine contacts are provided by residues T72, D93, and 121–122 (NA).

It belongs to the class I-like SAM-binding methyltransferase superfamily. MenG/UbiE family.

The catalysed reaction is a 2-demethylmenaquinol + S-adenosyl-L-methionine = a menaquinol + S-adenosyl-L-homocysteine + H(+). It catalyses the reaction a 2-methoxy-6-(all-trans-polyprenyl)benzene-1,4-diol + S-adenosyl-L-methionine = a 5-methoxy-2-methyl-3-(all-trans-polyprenyl)benzene-1,4-diol + S-adenosyl-L-homocysteine + H(+). Its pathway is quinol/quinone metabolism; menaquinone biosynthesis; menaquinol from 1,4-dihydroxy-2-naphthoate: step 2/2. The protein operates within cofactor biosynthesis; ubiquinone biosynthesis. Methyltransferase required for the conversion of demethylmenaquinol (DMKH2) to menaquinol (MKH2) and the conversion of 2-polyprenyl-6-methoxy-1,4-benzoquinol (DDMQH2) to 2-polyprenyl-3-methyl-6-methoxy-1,4-benzoquinol (DMQH2). This Hahella chejuensis (strain KCTC 2396) protein is Ubiquinone/menaquinone biosynthesis C-methyltransferase UbiE.